The chain runs to 484 residues: Glutamate--tRNA ligase (484 aa).

Positions Pro11–Asn21 match the 'HIGH' region motif. Positions Lys255–Arg259 match the 'KMSKS' region motif. Lys258 contributes to the ATP binding site.

The protein belongs to the class-I aminoacyl-tRNA synthetase family. Glutamate--tRNA ligase type 1 subfamily. In terms of assembly, monomer.

The protein resides in the cytoplasm. It catalyses the reaction tRNA(Glu) + L-glutamate + ATP = L-glutamyl-tRNA(Glu) + AMP + diphosphate. Catalyzes the attachment of glutamate to tRNA(Glu) in a two-step reaction: glutamate is first activated by ATP to form Glu-AMP and then transferred to the acceptor end of tRNA(Glu). The chain is Glutamate--tRNA ligase from Streptococcus agalactiae serotype Ia (strain ATCC 27591 / A909 / CDC SS700).